Consider the following 159-residue polypeptide: Insertion element IS136 uncharacterized 16.9 kDa protein (159 aa).

The segment covering 126–142 has biased composition (low complexity); that stretch reads RSFVSPSSSTPSTARSS. The interval 126 to 159 is disordered; sequence RSFVSPSSSTPSTARSSPGRPLPMQAFPAQTCAT.

The polypeptide is Insertion element IS136 uncharacterized 16.9 kDa protein (Agrobacterium tumefaciens (strain T37)).